Consider the following 103-residue polypeptide: Glycoprotein 24B (103 aa).

Belongs to the csb family. O-glycosylated.

Its subcellular location is the cell surface. Cell-cell adhesion during early development. The sequence is that of Glycoprotein 24B (csbB) from Dictyostelium discoideum (Social amoeba).